Consider the following 606-residue polypeptide: Glutamine--fructose-6-phosphate aminotransferase [isomerizing] (606 aa).

The active-site Nucleophile; for GATase activity is cysteine 2. A Glutamine amidotransferase type-2 domain is found at 2-218; it reads CGIFGYLGQR…SGELAVLRIG (217 aa). 2 SIS domains span residues 278–424 and 455–596; these read FAES…QRQE and WRCR…VDRP. Lysine 601 functions as the For Fru-6P isomerization activity in the catalytic mechanism.

As to quaternary structure, homodimer.

It localises to the cytoplasm. The enzyme catalyses D-fructose 6-phosphate + L-glutamine = D-glucosamine 6-phosphate + L-glutamate. In terms of biological role, catalyzes the first step in hexosamine metabolism, converting fructose-6P into glucosamine-6P using glutamine as a nitrogen source. The protein is Glutamine--fructose-6-phosphate aminotransferase [isomerizing] of Chlamydia muridarum (strain MoPn / Nigg).